A 60-amino-acid polypeptide reads, in one-letter code: Conotoxin Cal6.30 (60 aa).

A signal peptide spans 1–22 (MKVTCVLTLAVLILTIGQIANA). Intrachain disulfides connect C31/C47, C38/C51, and C46/C55.

Expressed by the venom duct.

It localises to the secreted. Its function is as follows. Probable neurotoxin. This chain is Conotoxin Cal6.30, found in Californiconus californicus (California cone).